The following is a 63-amino-acid chain: 2-hydroxymuconate tautomerase (63 aa).

Pro-2 (proton acceptor; via imino nitrogen) is an active-site residue.

Belongs to the 4-oxalocrotonate tautomerase family. As to quaternary structure, homohexamer.

The enzyme catalyses (2Z,4E)-2-hydroxyhexa-2,4-dienedioate = (3E)-2-oxohex-3-enedioate. Its pathway is xenobiotic degradation; toluene degradation. It participates in xenobiotic degradation; xylene degradation. Catalyzes the ketonization of 2-hydroxymuconate stereoselectively to yield 2-oxo-3-hexenedioate. This Pseudomonas putida (Arthrobacter siderocapsulatus) protein is 2-hydroxymuconate tautomerase (xylH).